A 275-amino-acid polypeptide reads, in one-letter code: Non-heme chloroperoxidase CPO-A1 (275 aa).

The AB hydrolase-1 domain maps to 22–255 (PVVFIHGWPL…KVYEGSSHGI (234 aa)). Active-site charge relay system residues include Ser-95, Asp-224, and His-253.

This sequence belongs to the AB hydrolase superfamily. Bacterial non-heme haloperoxidase / perhydrolase family. As to quaternary structure, homodimer.

Brominating activity not inhibited by azide, peroxidase activity stimulated by bromide. May be a chlorinating enzyme involved in 7-chlorotetracycline biosynthesis. Able to brominate as well. This Kitasatospora aureofaciens (Streptomyces aureofaciens) protein is Non-heme chloroperoxidase CPO-A1 (bpoA1).